Here is a 259-residue protein sequence, read N- to C-terminus: DNA utilization protein HofM (259 aa).

Required for the use of extracellular DNA as a nutrient. The sequence is that of DNA utilization protein HofM (hofM) from Escherichia coli (strain K12).